The following is a 975-amino-acid chain: 5'-3' exoribonuclease 2 homolog (975 aa).

The CCHC-type zinc-finger motif lies at 262-279; it reads RACDLCGQYGHELKECRG. Disordered regions lie at residues 424-443 and 505-532; these read MQMY…GRGQ and SPAD…EGPK. Residues 534 to 787 form an interaction with paxt-1 region; it reads DIRLYESGWK…GICVLYEDPE (254 aa). Over residues 804-821 the composition is skewed to basic and acidic residues; the sequence is EPEKTLKPDDWNDRRDGR. Residues 804–975 are disordered; the sequence is EPEKTLKPDD…GGYHGNSSWR (172 aa). 3 stretches are compositionally biased toward gly residues: residues 850-860, 886-895, and 908-932; these read RGGGGGGGGYR, NYGGRDGGGP, and GYQG…GGGS.

The protein belongs to the 5'-3' exonuclease family. XRN2/RAT1 subfamily. As to quaternary structure, interacts with paxt-1 (via N-terminus); the interaction is direct and results in stabilization of xrn-2 in the complex. As to expression, expressed in the pharyngeal myoepithelium and intestine. Also expressed in several anterior neurons including the sensory neurons, as well as the interneuron PVT and the pharyngeal motorneuron M5.

It is found in the nucleus. In terms of biological role, possesses 5'-&gt;3' exoribonuclease activity. Plays a role in maintenance of steady-state concentration and turnover of microRNAs (miRNA) by degradation of mature miRNA. Degradation role is enhanced when in complex with paxt-1. Partially redundant to xrn-1 in miRNA guide strand degradation. Implicated in differential regulation of mRNAs such as let-7 by controlling the accumulation of mature miRNA. Positively regulates molting of the pharyngeal cuticle. The chain is 5'-3' exoribonuclease 2 homolog from Caenorhabditis elegans.